The primary structure comprises 553 residues: Urocanate hydratase (553 aa).

NAD(+) is bound by residues 45 to 46 (GG), Gln123, 169 to 171 (GMG), Asp189, Arg194, 235 to 236 (NA), 256 to 260 (QTSAH), 266 to 267 (YV), Tyr315, and Gly485.

It belongs to the urocanase family. Requires NAD(+) as cofactor.

Its subcellular location is the cytoplasm. It catalyses the reaction 4-imidazolone-5-propanoate = trans-urocanate + H2O. It participates in amino-acid degradation; L-histidine degradation into L-glutamate; N-formimidoyl-L-glutamate from L-histidine: step 2/3. Its function is as follows. Catalyzes the conversion of urocanate to 4-imidazolone-5-propionate. The polypeptide is Urocanate hydratase (Staphylococcus saprophyticus subsp. saprophyticus (strain ATCC 15305 / DSM 20229 / NCIMB 8711 / NCTC 7292 / S-41)).